The primary structure comprises 576 residues: MSTNPNAGIQPLTNSISQSASAHPELYHTTSHESVSTYQLQSQLSHSATSNLSTAANFHTRPPIANDENAQNLSTVNSSHSSELSKANLVDVEKCIQDPLLQIFPTVEDPDRFVFSIDPKSPLIAVNWPFRKKLKITCVYSYVALCSTFASSVFSVPAEAITTIFHISLTVSLLTMTVFLCGYIAGPIVWAPLSELSGRKLPLLIGMFGFGIFNISVAVAKDIQTIMMCRFFSGFFASAPLTVVAAAFADMYSNKHRGTAITIFAALVFDGPLVSPIIGGFLTKSYLGWRWTEYITSFMGFFALVIVYLFCDETYSKAIIRNKAKEYRAMSGNYFVHAKSEEEVLTVPDVAKNYLLVPMKLLFTEPIVFLITLYSSFVYAILYLLLEAYPIIFSEKRHFSMGVAELPYIGLLVGVFIGSAINISFEPWYYRRCLALGGKPDPEARLPPMMIGCFMFPAGIFWLSWSGYYSYVHWIVPTLSGLATGCGILLIFLQCLNYLIDAYLFRAASAVAANTIMRSAMAAGFPLFAVQMFHNMGVGWAGSLLGFIAVALIPMPFAFFFFGRKIREKSKMAVVL.

Composition is skewed to polar residues over residues 1-21 (MSTN…QSAS) and 28-40 (HTTS…TYQL). Residues 1–40 (MSTNPNAGIQPLTNSISQSASAHPELYHTTSHESVSTYQL) are disordered. 12 helical membrane-spanning segments follow: residues 149–169 (FASS…HISL), 173–193 (LLTM…WAPL), 200–220 (KLPL…VAVA), 231–251 (FFSG…FADM), 261–281 (ITIF…IGGF), 291–311 (WTEY…YLFC), 366–386 (PIVF…YLLL), 401–421 (MGVA…GSAI), 446–466 (LPPM…LSWS), 472–492 (VHWI…LLIF), 503–525 (YLFR…AAGF), and 542–562 (GSLL…FFFF).

The protein belongs to the major facilitator superfamily. CAR1 family.

It localises to the endoplasmic reticulum. It is found in the golgi apparatus. The protein resides in the membrane. This is an uncharacterized protein from Schizosaccharomyces pombe (strain 972 / ATCC 24843) (Fission yeast).